The primary structure comprises 377 residues: 3-dehydroquinate synthase (377 aa).

NAD(+)-binding positions include glycine 115 to aspartate 119, threonine 139 to serine 140, lysine 152, and lysine 161. Residues glutamate 194, histidine 256, and histidine 275 each contribute to the Zn(2+) site.

This sequence belongs to the sugar phosphate cyclases superfamily. Dehydroquinate synthase family. NAD(+) is required as a cofactor. Requires Co(2+) as cofactor. It depends on Zn(2+) as a cofactor.

The protein localises to the cytoplasm. The enzyme catalyses 7-phospho-2-dehydro-3-deoxy-D-arabino-heptonate = 3-dehydroquinate + phosphate. It functions in the pathway metabolic intermediate biosynthesis; chorismate biosynthesis; chorismate from D-erythrose 4-phosphate and phosphoenolpyruvate: step 2/7. Functionally, catalyzes the conversion of 3-deoxy-D-arabino-heptulosonate 7-phosphate (DAHP) to dehydroquinate (DHQ). The polypeptide is 3-dehydroquinate synthase (Rhizobium meliloti (strain 1021) (Ensifer meliloti)).